The sequence spans 431 residues: ABSCISIC ACID-INSENSITIVE 5-like protein 7 (431 aa).

A disordered region spans residues 1–29; sequence MGTHINFNNLGGGGHPGGEGSSNQMKPTG. Positions 10–20 are enriched in gly residues; it reads LGGGGHPGGEG. Phosphoserine is present on residues Ser-39 and Ser-61. Phosphoserine; by CPK32 is present on Ser-110. The interval 133-153 is disordered; the sequence is DGNMEGSSGGGGESNVPPGRQ. Residue Thr-155 is modified to Phosphothreonine. Over residues 319–331 the composition is skewed to polar residues; sequence SPGTSSAENNSLS. The interval 319-338 is disordered; the sequence is SPGTSSAENNSLSPVPYVLN. The Nuclear localization signal signature appears at 340–347; the sequence is GRRSNTGL. One can recognise a bZIP domain in the interval 351–414; it reads IERRQRRMIK…KNELKETSKR (64 aa). Residues 353–372 are basic motif; the sequence is RRQRRMIKNRESAARSRARK. Residues 372 to 411 adopt a coiled-coil conformation; that stretch reads KQAYTLELEAEIEKLKKTNQELQKKQAEMVEMQKNELKET. The interval 379–393 is leucine-zipper; the sequence is LEAEIEKLKKTNQEL.

It belongs to the bZIP family. ABI5 subfamily. DNA-binding heterodimer. Interacts with CPK32 and the AFP proteins AFP1, AFP2 and AFP3. Interacts with FREE1 (via C-terminus). Phosphorylated by CPK4 and CPK11 in vitro. As to expression, expressed in roots, leaves, flowers and immatures siliques.

It localises to the nucleus. Functions as a transcriptional activator in the ABA-inducible expression of LTI65/RD29B (AC Q04980). Binds specifically to the ABA-responsive element (ABRE) of the LTI65/RD29B (AC Q04980) gene promoter. Binds to the promoter of FREE1 and activates its transcription. In Arabidopsis thaliana (Mouse-ear cress), this protein is ABSCISIC ACID-INSENSITIVE 5-like protein 7.